The primary structure comprises 533 residues: Histone-arginine methyltransferase CARMER (533 aa).

The 310-residue stretch at 143–452 folds into the SAM-dependent MTase PRMT-type domain; the sequence is ASQYFQFYGY…QSYDVTIDLH (310 aa). S-adenosyl-L-methionine contacts are provided by Gln156, Arg165, Gly189, Glu211, Glu240, and Thr268. Arg503 is subject to Asymmetric dimethylarginine; by autocatalysis.

The protein belongs to the class I-like SAM-binding methyltransferase superfamily. Protein arginine N-methyltransferase family. Homodimer. Post-translationally, the dimethylated protein is the major form.

Its subcellular location is the cytoplasm. The protein resides in the nucleus. The enzyme catalyses L-arginyl-[protein] + 2 S-adenosyl-L-methionine = N(omega),N(omega)-dimethyl-L-arginyl-[protein] + 2 S-adenosyl-L-homocysteine + 2 H(+). In terms of biological role, methylates (mono- and asymmetric dimethylation) the guanidino nitrogens of arginyl residues in proteins. May methylate histone H3 at 'Arg-17' and activate transcription via chromatin remodeling. The sequence is that of Histone-arginine methyltransferase CARMER (Art4) from Drosophila willistoni (Fruit fly).